Reading from the N-terminus, the 164-residue chain is Large ribosomal subunit protein uL10 (164 aa).

This sequence belongs to the universal ribosomal protein uL10 family. As to quaternary structure, part of the ribosomal stalk of the 50S ribosomal subunit. The N-terminus interacts with L11 and the large rRNA to form the base of the stalk. The C-terminus forms an elongated spine to which L12 dimers bind in a sequential fashion forming a multimeric L10(L12)X complex.

In terms of biological role, forms part of the ribosomal stalk, playing a central role in the interaction of the ribosome with GTP-bound translation factors. This Pseudoalteromonas translucida (strain TAC 125) protein is Large ribosomal subunit protein uL10.